The primary structure comprises 490 residues: Inosine-5'-monophosphate dehydrogenase (490 aa).

2 consecutive CBS domains span residues 96–154 (MIIN…SKPV) and 158–218 (MTKE…CKDE). Residues Asp-252 and 302-304 (GVG) contribute to the NAD(+) site. K(+) is bound by residues Gly-304 and Gly-306. Ser-307 lines the IMP pocket. Residue Cys-309 coordinates K(+). Cys-309 acts as the Thioimidate intermediate in catalysis. IMP contacts are provided by residues 342 to 344 (DGG), 365 to 366 (GN), and 389 to 393 (YRGMG). Arg-406 functions as the Proton acceptor in the catalytic mechanism. Residue Glu-418 participates in IMP binding. 3 residues coordinate K(+): Glu-472, Ser-473, and His-474.

Belongs to the IMPDH/GMPR family. Homotetramer. K(+) is required as a cofactor.

It carries out the reaction IMP + NAD(+) + H2O = XMP + NADH + H(+). It functions in the pathway purine metabolism; XMP biosynthesis via de novo pathway; XMP from IMP: step 1/1. Its activity is regulated as follows. Mycophenolic acid (MPA) is a non-competitive inhibitor that prevents formation of the closed enzyme conformation by binding to the same site as the amobile flap. In contrast, mizoribine monophosphate (MZP) is a competitive inhibitor that induces the closed conformation. MPA is a potent inhibitor of mammalian IMPDHs but a poor inhibitor of the bacterial enzymes. MZP is a more potent inhibitor of bacterial IMPDH. Catalyzes the conversion of inosine 5'-phosphate (IMP) to xanthosine 5'-phosphate (XMP), the first committed and rate-limiting step in the de novo synthesis of guanine nucleotides, and therefore plays an important role in the regulation of cell growth. The polypeptide is Inosine-5'-monophosphate dehydrogenase (Aquifex aeolicus (strain VF5)).